The following is a 622-amino-acid chain: Probable potassium transport system protein Kup (622 aa).

A run of 12 helical transmembrane segments spans residues 8-28 (LAAL…TSVL), 50-70 (VLSV…VVLV), 100-120 (GWLL…GVIT), 137-157 (PHFG…LFAV), 169-189 (FGPV…PHIV), 203-223 (ALGF…AVVL), 247-267 (WFSV…ALLL), 285-305 (ALVP…QALI), 337-357 (IYLP…VVMF), 366-386 (AYGI…FFVI), 392-412 (YPLA…LAFF), and 419-439 (LLQG…LMMT).

It belongs to the HAK/KUP transporter (TC 2.A.72) family.

The protein resides in the cell inner membrane. It carries out the reaction K(+)(in) + H(+)(in) = K(+)(out) + H(+)(out). Functionally, transport of potassium into the cell. Likely operates as a K(+):H(+) symporter. The chain is Probable potassium transport system protein Kup from Acidovorax ebreus (strain TPSY) (Diaphorobacter sp. (strain TPSY)).